Here is a 429-residue protein sequence, read N- to C-terminus: MTSVVVVGTQWGDEGKGKITDFLSADAEVIARYQGGDNAGHTIVIDGKKFKLHLIPSGIFFPEKVSVIGNGMVVNPKSLVEELDYLHQEGVATDNLRISDRAHIILPYHIKLDQLQEASKGDNKIGTTNKGIGPAYMDKAARVGIRIADLLDKDIFAERLKANLAEKNRLFEKMYESSPVAFDTIFDEYYAYGQKIKDYVTDTSVILNKALDKGRRVLFEGAQGVMLDIDQGTYPFVTSSNPVAGGVTIGSGVGPSKINKVVGVCKAYTSRVGDGPFPTELFDQTGERIREVGHEYGTTTGRPRRVGWFDSVVMRHSRRVSGITNLSLNCIDVLSGLDIVKICVAYDLDGKRIDHYPASLEQLKRCKPIYEELPGWSEDITGVRSLEDLPENARNYVRRVSELVGVRISTFSVGPDRDQTNILESVWGL.

GTP contacts are provided by residues 12 to 18 and 40 to 42; these read GDEGKGK and GHT. Aspartate 13 functions as the Proton acceptor in the catalytic mechanism. The Mg(2+) site is built by aspartate 13 and glycine 40. Residues 13-16, 38-41, threonine 128, arginine 142, glutamine 223, threonine 238, and arginine 302 each bind IMP; these read DEGK and NAGH. The active-site Proton donor is the histidine 41. 298–304 provides a ligand contact to substrate; that stretch reads TTTGRPR. GTP is bound by residues arginine 304, 330 to 332, and 412 to 414; these read CID and SVG.

The protein belongs to the adenylosuccinate synthetase family. Homodimer. The cofactor is Mg(2+).

The protein resides in the cytoplasm. The catalysed reaction is IMP + L-aspartate + GTP = N(6)-(1,2-dicarboxyethyl)-AMP + GDP + phosphate + 2 H(+). It functions in the pathway purine metabolism; AMP biosynthesis via de novo pathway; AMP from IMP: step 1/2. Functionally, plays an important role in the de novo pathway of purine nucleotide biosynthesis. Catalyzes the first committed step in the biosynthesis of AMP from IMP. The polypeptide is Adenylosuccinate synthetase (Streptococcus mutans serotype c (strain ATCC 700610 / UA159)).